The sequence spans 888 residues: Transmembrane channel-like protein 2 (888 aa).

Residues methionine 1–aspartate 128 are disordered. Residues methionine 1 to glycine 228 are Cytoplasmic-facing. 3 stretches are compositionally biased toward basic and acidic residues: residues serine 7–alanine 16, aspartate 32–alanine 44, and arginine 87–lysine 110. Positions serine 117–aspartate 128 are enriched in polar residues. The chain crosses the membrane as a helical span at residues serine 229–proline 266. Over tyrosine 267–tyrosine 317 the chain is Extracellular. The helical transmembrane segment at arginine 318 to threonine 350 threads the bilayer. Topologically, residues serine 351 to histidine 406 are cytoplasmic. The helical transmembrane segment at leucine 407–serine 437 threads the bilayer. Residues glutamine 438 to serine 447 are Extracellular-facing. A helical membrane pass occupies residues tryptophan 448–leucine 475. The Cytoplasmic portion of the chain corresponds to glutamate 476–histidine 479. A helical membrane pass occupies residues proline 480 to leucine 514. The Extracellular segment spans residues serine 515–cysteine 556. A helical membrane pass occupies residues tryptophan 557 to methionine 594. At asparagine 595 to aspartate 613 the chain is on the cytoplasmic side. The chain crosses the membrane as a helical span at residues isoleucine 614–tyrosine 634. The Extracellular portion of the chain corresponds to alanine 635 to glycine 637. Residues leucine 638–serine 660 traverse the membrane as a helical segment. Residues asparagine 661–asparagine 674 lie on the Cytoplasmic side of the membrane. A helical membrane pass occupies residues asparagine 675–serine 698. The Extracellular portion of the chain corresponds to leucine 699–glycine 741. The chain crosses the membrane as a helical span at residues leucine 742–isoleucine 775. Topologically, residues glutamine 776–asparagine 888 are cytoplasmic. Residues leucine 813–asparagine 888 form a disordered region. 2 stretches are compositionally biased toward polar residues: residues proline 836–tryptophan 851 and glycine 866–lysine 881.

The protein belongs to the TMC family. As to quaternary structure, forms the MET channel composed of TMC dimer (TMC1 or TMC2), TMIE, TOMT, CIB (CIB2 or CIB3), LHFPL5 and PDH15. The interaction of TMC1 and TMC2 with TOMT is required for the transportation of TMC1/2 into the stereocilia of hair cells. Interacts (via N-terminus) with both isoforms CD1 and CD3 of PCDH15. Can form a heterodimer with TMC1, TMC5 or TMC7. In terms of tissue distribution, inner ear and testis. Expressed in cochlear inner and outer hair cells and vestibular organ hair cells.

The protein localises to the cell membrane. The enzyme catalyses Ca(2+)(in) = Ca(2+)(out). Its function is as follows. Pore-forming subunit of the mechanotransducer (MET) non-selective cation channel complex located at the tips of stereocilia of cochlear hair cells and that mediates sensory transduction in the auditory system. The MET complex is composed of two dimeric pore-forming ion-conducting transmembrane TMC (TMC1 or TMC2) subunits, several auxiliary proteins including LHFPL5, TMIE, CIB2/3 and TOMT, the tip-link PCDH15, and possibly the PIEZO subunits. MET channel is activated by tension in the tip-link extending from the side wall of one stereocilium to the tip of the adjacent shorter stereocilium, where the channel is located. TMC2 MET channel is highly permeable to calcium and likely transports monovalent cations. Also involved in vestibular hair cell transduction current of the mammalian inner ear. The polypeptide is Transmembrane channel-like protein 2 (Mus musculus (Mouse)).